The primary structure comprises 379 residues: Deoxyhypusine synthase (379 aa).

NAD(+) contacts are provided by residues 108–112 (SNLIS), 134–136 (TAG), Glu-140, and Asp-257. A spermidine-binding site is contributed by 139-140 (EE). Spermidine is bound at residue Asp-262. Residue Gly-304 participates in NAD(+) binding. Spermidine is bound at residue His-309. An NAD(+)-binding site is contributed by 329–330 (TG). Spermidine-binding positions include 335–337 (GSD) and 344–350 (EAVSWGK). Lys-350 serves as the catalytic Nucleophile. Residue 363 to 364 (DA) participates in NAD(+) binding.

Belongs to the deoxyhypusine synthase family. The cofactor is NAD(+).

The catalysed reaction is [eIF5A protein]-L-lysine + spermidine = [eIF5A protein]-deoxyhypusine + propane-1,3-diamine. Its pathway is protein modification; eIF5A hypusination. Catalyzes the NAD-dependent oxidative cleavage of spermidine and the subsequent transfer of the butylamine moiety of spermidine to the epsilon-amino group of a specific lysine residue of the eIF-5A precursor protein to form the intermediate deoxyhypusine residue. In Kluyveromyces lactis (strain ATCC 8585 / CBS 2359 / DSM 70799 / NBRC 1267 / NRRL Y-1140 / WM37) (Yeast), this protein is Deoxyhypusine synthase (DYS1).